The chain runs to 450 residues: Bifunctional protein GlmU (450 aa).

The segment at 1–228 (MSTALVILAA…EAQTLGVNSR (228 aa)) is pyrophosphorylase. Residues 8 to 11 (LAAG), lysine 22, glutamine 75, 80 to 81 (GT), 103 to 105 (YGD), glycine 140, glutamate 154, asparagine 169, and asparagine 226 contribute to the UDP-N-acetyl-alpha-D-glucosamine site. Aspartate 105 is a binding site for Mg(2+). Mg(2+) is bound at residue asparagine 226. Residues 229–249 (ADLAAADAIFQTRARAELLDL) are linker. Residues 250–450 (GVTLMAPETV…AKKASKQKET (201 aa)) form an N-acetyltransferase region. UDP-N-acetyl-alpha-D-glucosamine is bound by residues arginine 315 and lysine 333. Histidine 345 acts as the Proton acceptor in catalysis. UDP-N-acetyl-alpha-D-glucosamine contacts are provided by tyrosine 348 and asparagine 359. Residues alanine 362, 368-369 (NY), serine 387, threonine 405, and arginine 422 contribute to the acetyl-CoA site.

In the N-terminal section; belongs to the N-acetylglucosamine-1-phosphate uridyltransferase family. It in the C-terminal section; belongs to the transferase hexapeptide repeat family. As to quaternary structure, homotrimer. It depends on Mg(2+) as a cofactor.

The protein resides in the cytoplasm. It catalyses the reaction alpha-D-glucosamine 1-phosphate + acetyl-CoA = N-acetyl-alpha-D-glucosamine 1-phosphate + CoA + H(+). It carries out the reaction N-acetyl-alpha-D-glucosamine 1-phosphate + UTP + H(+) = UDP-N-acetyl-alpha-D-glucosamine + diphosphate. It participates in nucleotide-sugar biosynthesis; UDP-N-acetyl-alpha-D-glucosamine biosynthesis; N-acetyl-alpha-D-glucosamine 1-phosphate from alpha-D-glucosamine 6-phosphate (route II): step 2/2. The protein operates within nucleotide-sugar biosynthesis; UDP-N-acetyl-alpha-D-glucosamine biosynthesis; UDP-N-acetyl-alpha-D-glucosamine from N-acetyl-alpha-D-glucosamine 1-phosphate: step 1/1. It functions in the pathway bacterial outer membrane biogenesis; LPS lipid A biosynthesis. In terms of biological role, catalyzes the last two sequential reactions in the de novo biosynthetic pathway for UDP-N-acetylglucosamine (UDP-GlcNAc). The C-terminal domain catalyzes the transfer of acetyl group from acetyl coenzyme A to glucosamine-1-phosphate (GlcN-1-P) to produce N-acetylglucosamine-1-phosphate (GlcNAc-1-P), which is converted into UDP-GlcNAc by the transfer of uridine 5-monophosphate (from uridine 5-triphosphate), a reaction catalyzed by the N-terminal domain. The sequence is that of Bifunctional protein GlmU from Ruegeria pomeroyi (strain ATCC 700808 / DSM 15171 / DSS-3) (Silicibacter pomeroyi).